The primary structure comprises 167 residues: Signal peptidase complex subunit 2 (167 aa).

The Cytoplasmic portion of the chain corresponds to 1–36 (MPKYNVSDFKSKFDKELTNHFNKNGYKQSFVFEDIR). A helical transmembrane segment spans residues 37 to 57 (LLIAIACIIPAGLAFGIEYVY). At 58 to 68 (GFGVLKSYLKY) the chain is on the lumenal side. Residues 69 to 89 (LLPLYFLASCLLTFWSSVVKG) traverse the membrane as a helical segment. At 90 to 167 (STVYVATKKE…ISKYLSQIEN (78 aa)) the chain is on the cytoplasmic side.

Belongs to the SPCS2 family. In terms of assembly, component of the signal peptidase complex (SPC) composed of a catalytic subunit sec11 and three accessory subunits spc1, spc2 and spc3. The complex induces a local thinning of the ER membrane which is used to measure the length of the signal peptide (SP) h-region of protein substrates. This ensures the selectivity of the complex towards h-regions shorter than 18-20 amino acids. SPC associates with the translocon complex.

The protein localises to the endoplasmic reticulum membrane. In terms of biological role, component of the signal peptidase complex (SPC) which catalyzes the cleavage of N-terminal signal sequences from nascent proteins as they are translocated into the lumen of the endoplasmic reticulum. Enhances the enzymatic activity of SPC and facilitates the interactions between different components of the translocation site. In Schizosaccharomyces pombe (strain 972 / ATCC 24843) (Fission yeast), this protein is Signal peptidase complex subunit 2 (spc2).